The following is a 28-amino-acid chain: Cytochrome b6-f complex subunit 6 (28 aa).

A helical membrane pass occupies residues 2–22; it reads VEYLVILSGMFGLALACFFGL.

Belongs to the PetL family. As to quaternary structure, the 4 large subunits of the cytochrome b6-f complex are cytochrome b6, subunit IV (17 kDa polypeptide, PetD), cytochrome f and the Rieske protein, while the 4 small subunits are PetG, PetL, PetM and PetN. The complex functions as a dimer.

The protein localises to the plastid. Its subcellular location is the cyanelle thylakoid membrane. Component of the cytochrome b6-f complex, which mediates electron transfer between photosystem II (PSII) and photosystem I (PSI), cyclic electron flow around PSI, and state transitions. PetL is important for photoautotrophic growth as well as for electron transfer efficiency and stability of the cytochrome b6-f complex. The polypeptide is Cytochrome b6-f complex subunit 6 (Cyanophora paradoxa).